Reading from the N-terminus, the 215-residue chain is Probable transaldolase (215 aa).

K83 acts as the Schiff-base intermediate with substrate in catalysis.

Belongs to the transaldolase family. Type 3B subfamily.

The protein localises to the cytoplasm. It carries out the reaction D-sedoheptulose 7-phosphate + D-glyceraldehyde 3-phosphate = D-erythrose 4-phosphate + beta-D-fructose 6-phosphate. It functions in the pathway carbohydrate degradation; pentose phosphate pathway; D-glyceraldehyde 3-phosphate and beta-D-fructose 6-phosphate from D-ribose 5-phosphate and D-xylulose 5-phosphate (non-oxidative stage): step 2/3. Its function is as follows. Transaldolase is important for the balance of metabolites in the pentose-phosphate pathway. This is Probable transaldolase from Desulforapulum autotrophicum (strain ATCC 43914 / DSM 3382 / VKM B-1955 / HRM2) (Desulfobacterium autotrophicum).